The chain runs to 594 residues: UvrABC system protein C (594 aa).

Residues 13-99 (NSSGVYQYFD…IKQLKPKYNI (87 aa)) form the GIY-YIG domain. Residues 205-240 (DRLIKELELKMERLSSNLRFEEALIYRDRIAKIQKI) enclose the UVR domain.

Belongs to the UvrC family. In terms of assembly, interacts with UvrB in an incision complex.

It is found in the cytoplasm. In terms of biological role, the UvrABC repair system catalyzes the recognition and processing of DNA lesions. UvrC both incises the 5' and 3' sides of the lesion. The N-terminal half is responsible for the 3' incision and the C-terminal half is responsible for the 5' incision. This Helicobacter pylori (strain G27) protein is UvrABC system protein C.